Here is a 387-residue protein sequence, read N- to C-terminus: Glutamate N-acetyltransferase (387 aa).

Residues T140, K162, T173, E257, N382, and T387 each contribute to the substrate site. Residue T173 is the Nucleophile of the active site.

The protein belongs to the ArgJ family. As to quaternary structure, heterotetramer of two alpha and two beta chains.

It is found in the cytoplasm. The catalysed reaction is N(2)-acetyl-L-ornithine + L-glutamate = N-acetyl-L-glutamate + L-ornithine. The protein operates within amino-acid biosynthesis; L-arginine biosynthesis; L-ornithine and N-acetyl-L-glutamate from L-glutamate and N(2)-acetyl-L-ornithine (cyclic): step 1/1. In terms of biological role, catalyzes the transfer of the acetyl group from N(2)-acetylornithine to glutamate, forming N-acetylglutamate and L-ornithine. The polypeptide is Glutamate N-acetyltransferase (Methanopyrus kandleri (strain AV19 / DSM 6324 / JCM 9639 / NBRC 100938)).